The following is a 511-amino-acid chain: Zinc finger CCCH-type with G patch domain-containing protein (511 aa).

Met1 is modified (N-acetylmethionine). Ser70 carries the phosphoserine modification. Residues 92 to 129 form a disordered region; that stretch reads PGAPCNDSETAPGSEVQPGSTSSALEEEEEDPDLEELS. Polar residues predominate over residues 98 to 115; it reads DSETAPGSEVQPGSTSSA. Residues 116–127 are compositionally biased toward acidic residues; sequence LEEEEEDPDLEE. The segment at 174–200 adopts a C3H1-type zinc-finger fold; it reads KSLKPCPFFLEGKCRFKENCRFSHGQV. Positions 266-291 are disordered; sequence PPLRTEATESSDSDTGDASDSSYARV. Position 276 is a phosphoserine (Ser276). Thr280 is modified (phosphothreonine). The G-patch domain occupies 313 to 359; that stretch reads TRGIGSKLLVKMGYEFGKGLGRHAEGRVEPIHAVVLPRGKSLDQCAE. Ser353 carries the phosphoserine modification. Disordered regions lie at residues 363–393 and 490–511; these read KKTK…PPRN and AQEA…MTEF. A compositionally biased stretch (basic and acidic residues) spans 491 to 511; it reads QEADLQRKQRKADTHRKMTEF.

As to quaternary structure, interacts with CHD4/Mi-2; the interaction is direct.

It localises to the nucleus. Functionally, transcription repressor that specifically binds the 5'-GGAG[GA]A[GA]A-3' consensus sequence. Represses transcription by recruiting the chromatin multiprotein complex NuRD to target promoters. Negatively regulates expression of EGFR, a gene involved in cell proliferation, survival and migration. Its ability to repress genes of the EGFR pathway suggest it may act as a tumor suppressor. This chain is Zinc finger CCCH-type with G patch domain-containing protein (Zgpat), found in Mus musculus (Mouse).